Consider the following 566-residue polypeptide: F-box/WD repeat-containing protein 5 (566 aa).

The region spanning 3 to 49 is the F-box domain; it reads EGGTPLLPDSLVYQIFLSLGPADVLAAGLVCRQWQAVSRDEFLWREQ. WD repeat units follow at residues 83 to 125, 126 to 178, 179 to 238, and 239 to 281; these read VEVQ…DLTI, SLLH…LDSF, ALLS…VKRL, and FKIQ…RIFD. Ser151 is modified (phosphoserine; by PLK4). Ser284 carries the post-translational modification Phosphoserine. The D-box motif lies at 303–311; that stretch reads RHFLDRVLE. WD repeat units lie at residues 394-447, 458-501, and 502-539; these read ALDH…DLLV, RALR…RHYN, and ICLA…KAWR.

Belongs to the FBXW5 family. Part of the SCF (SKP1-CUL1-F-box) E3 ubiquitin-protein ligase complex SCF(FBXW5) composed of CUL1, SKP1, RBX1 and FBXW5. Component of the DCX(FBXW5) E3 ubiquitin ligase complex, at least composed of (CUL4A or CUL4B), DDB1, FBXW5 and RBX1. Interacts with CDC20, EPS8, TSC1, TSC2 and SASS6. Interacts with TNFAIP8L1; TNFAIP8L1 competes with TSC2 to bind FBXW5 increasing TSC2 stability by preventing its ubiquitination. Phosphorylated at Ser-151 by PLK4 during the G1/S transition, leading to inhibit its ability to ubiquitinate SASS6. Post-translationally, ubiquitinated and degraded by the APC/C complex during mitosis and G1 phase.

The protein localises to the cytoplasm. Its pathway is protein modification; protein ubiquitination. Functionally, substrate recognition component of both SCF (SKP1-CUL1-F-box protein) and DCX (DDB1-CUL4-X-box) E3 ubiquitin-protein ligase complexes. Substrate recognition component of the SCF(FBXW5) E3 ubiquitin-protein ligase complex which mediates the ubiquitination and subsequent proteasomal degradation of SASS6 during S phase, leading to prevent centriole reduplication. The SCF(FBXW5) complex also mediates ubiquitination and degradation of actin-regulator EPS8 during G2 phase, leading to the transient degradation of EPS8 and subsequent cell shape changes required to allow mitotic progression. Substrate-specific adapter of the DCX(FBXW5) E3 ubiquitin-protein ligase complex which mediates the polyubiquitination and subsequent degradation of TSC2. May also act as a negative regulator of MAP3K7/TAK1 signaling in the interleukin-1B (IL1B) signaling pathway. The chain is F-box/WD repeat-containing protein 5 (FBXW5) from Homo sapiens (Human).